Consider the following 339-residue polypeptide: Fructose-1,6-bisphosphatase isozyme 2 (339 aa).

An important for interaction with ALDOA region spans residues 3-10; the sequence is DRSPFETD. Residues Val-18 and 28–32 each bind AMP; that span reads TGELT. Positions 69 and 98 each coordinate Mg(2+). Residue 113–114 participates in AMP binding; that stretch reads KY. Residues Asp-119, Leu-121, and Asp-122 each contribute to the Mg(2+) site. Asp-122 lines the substrate pocket. Arg-141 is a binding site for AMP. The Nuclear localization signal motif lies at 204 to 208; it reads KKKGK. 213–216 contributes to the substrate binding site; sequence NEGY. 2 positions are modified to phosphotyrosine: Tyr-216 and Tyr-219. Residues 245–249, Tyr-265, and Lys-275 each bind substrate; that span reads YVGSM. Glu-281 is a binding site for Mg(2+).

The protein belongs to the FBPase class 1 family. As to quaternary structure, homotetramer. Interacts with ALDOA; the interaction blocks inhibition by physiological concentrations of AMP and reduces inhibition by Ca(2+). Interacts with alpha-actinin and F-actin. The cofactor is Mg(2+). Expressed in muscle, intestine, brain and placenta and very weakly in liver.

It is found in the cell junction. It localises to the cytoplasm. The protein localises to the nucleus. The protein resides in the myofibril. Its subcellular location is the sarcomere. It is found in the z line. The catalysed reaction is beta-D-fructose 1,6-bisphosphate + H2O = beta-D-fructose 6-phosphate + phosphate. It participates in carbohydrate biosynthesis; gluconeogenesis. Subject to complex allosteric regulation. The enzyme can assume an active R-state, or an inactive T-state. Intermediate conformations may exist. AMP acts as an allosteric inhibitor. Fructose 2,6-bisphosphate acts as a competitive inhibitor. Strongly inhibited by Ca(2+). Functionally, catalyzes the hydrolysis of fructose 1,6-bisphosphate to fructose 6-phosphate in the presence of divalent cations and probably participates in glycogen synthesis from carbohydrate precursors, such as lactate. This Mus musculus (Mouse) protein is Fructose-1,6-bisphosphatase isozyme 2 (Fbp2).